Reading from the N-terminus, the 121-residue chain is Histone H2B, sperm (121 aa).

Residues 1–30 (MPPKSGKGQKKAGKAKGAPRSDKKRRRKRK) form a disordered region. The residue at position 2 (proline 2) is a N,N-dimethylproline. The O-linked (GlcNAc) serine glycan is linked to serine 108. Lysine 116 is covalently cross-linked (Glycyl lysine isopeptide (Lys-Gly) (interchain with G-Cter in ubiquitin)).

Belongs to the histone H2B family. The nucleosome is a histone octamer containing two molecules each of H2A, H2B, H3 and H4 assembled in one H3-H4 heterotetramer and two H2A-H2B heterodimers. The octamer wraps approximately 147 bp of DNA. Monoubiquitination of Lys-116 gives a specific tag for epigenetic transcriptional activation and is also prerequisite for histone H3 'Lys-4' and 'Lys-79' methylation. Post-translationally, glcNAcylation at Ser-108 promotes monoubiquitination of Lys-116. It fluctuates in response to extracellular glucose, and associates with transcribed genes.

The protein resides in the nucleus. Its subcellular location is the chromosome. Its function is as follows. Core component of nucleosome. Nucleosomes wrap and compact DNA into chromatin, limiting DNA accessibility to the cellular machineries which require DNA as a template. Histones thereby play a central role in transcription regulation, DNA repair, DNA replication and chromosomal stability. DNA accessibility is regulated via a complex set of post-translational modifications of histones, also called histone code, and nucleosome remodeling. This is Histone H2B, sperm from Marthasterias glacialis (Spiny starfish).